The sequence spans 167 residues: MRRVVTLVSKEQAEVGHRFRVFSIPEECKDCRLYPVCMGRLAPGRSYKVVEVRPSMGQRCKITDGEMVPVVVEEAPVIGLLPLNKALEGVVVTFEEECAGCEGCPSDVVKKGEKIKVVKIVGRKRCRGREFAIVEFYVVSPPSPSGSSISATSQGPSRAPPSRRLLK.

Positions 142-167 (PSPSGSSISATSQGPSRAPPSRRLLK) are disordered. A compositionally biased stretch (low complexity) spans 145–157 (SGSSISATSQGPS).

The protein belongs to the UPF0179 family.

This is UPF0179 protein PAE0681 from Pyrobaculum aerophilum (strain ATCC 51768 / DSM 7523 / JCM 9630 / CIP 104966 / NBRC 100827 / IM2).